A 457-amino-acid polypeptide reads, in one-letter code: Non-structural protein V (457 aa).

2 disordered regions span residues 26–104 and 193–403; these read KTYG…DPDD and FVPK…MPIK. 2 stretches are compositionally biased toward polar residues: residues 28–37 and 77–96; these read YGRSSIQQPS and DLSS…SNTR. The segment covering 240-252 has biased composition (acidic residues); that stretch reads SDDEDENQLEYED. Residue serine 257 is modified to Phosphoserine; by host. Residues 296 to 317 show a composition bias toward basic and acidic residues; the sequence is FPEKEETPDVRRKDSLMQDSCK. Serine 350 is modified (phosphoserine; by host). 8 residues coordinate Zn(2+): histidine 406, cysteine 425, cysteine 429, cysteine 441, cysteine 443, cysteine 446, cysteine 450, and cysteine 453.

Belongs to the paramyxoviruses V protein family. Interacts with host IFIH1/MDA5, DHX58/LGP2, STAT1 and STAT2.

Its subcellular location is the host cytoplasm. Plays an essential role in the inhibition of host immune response. Prevents the establishment of cellular antiviral state by blocking interferon-alpha/beta (IFN-alpha/beta) production and signaling pathway. Interacts with host IFIH1/MDA5 and DHX58/LGP2 to inhibit the transduction pathway involved in the activation of IFN-beta promoter, thus protecting the virus against cell antiviral state. Blocks the type I interferon signaling pathway by interacting with host STAT1 and STAT2 and thereby inhibiting their phosphorylation and subsequent nuclear translocation. Efficiently blocks the type II interferon signaling pathway. This Hendra virus (isolate Horse/Autralia/Hendra/1994) protein is Non-structural protein V (P/V/C).